A 255-amino-acid chain; its full sequence is UPF0246 protein DP0358 (255 aa).

This sequence belongs to the UPF0246 family.

The chain is UPF0246 protein DP0358 from Desulfotalea psychrophila (strain LSv54 / DSM 12343).